The sequence spans 222 residues: Orotidine 5'-phosphate decarboxylase (222 aa).

Residues Asp-11, Lys-30, 59 to 68 (DFKLADIGYI), Ser-115, 164 to 174 (PGMGSQGGSYG), Gly-187, and Arg-188 contribute to the substrate site. Lys-61 functions as the Proton donor in the catalytic mechanism.

The protein belongs to the OMP decarboxylase family. Type 1 subfamily. As to quaternary structure, homodimer.

It catalyses the reaction orotidine 5'-phosphate + H(+) = UMP + CO2. It functions in the pathway pyrimidine metabolism; UMP biosynthesis via de novo pathway; UMP from orotate: step 2/2. Catalyzes the decarboxylation of orotidine 5'-monophosphate (OMP) to uridine 5'-monophosphate (UMP). The sequence is that of Orotidine 5'-phosphate decarboxylase from Saccharolobus solfataricus (strain ATCC 35092 / DSM 1617 / JCM 11322 / P2) (Sulfolobus solfataricus).